The chain runs to 346 residues: UDP-N-acetylenolpyruvoylglucosamine reductase (346 aa).

An FAD-binding PCMH-type domain is found at 18 to 189; that stretch reads LRAQARAFIA…VSVVFALKTH (172 aa). The active site involves arginine 165. Serine 240 acts as the Proton donor in catalysis. Glutamate 336 is an active-site residue.

The protein belongs to the MurB family. FAD serves as cofactor.

Its subcellular location is the cytoplasm. The enzyme catalyses UDP-N-acetyl-alpha-D-muramate + NADP(+) = UDP-N-acetyl-3-O-(1-carboxyvinyl)-alpha-D-glucosamine + NADPH + H(+). It functions in the pathway cell wall biogenesis; peptidoglycan biosynthesis. Functionally, cell wall formation. The chain is UDP-N-acetylenolpyruvoylglucosamine reductase from Neisseria meningitidis serogroup B (strain ATCC BAA-335 / MC58).